The sequence spans 168 residues: Bifunctional protein PyrR (168 aa).

Residues 90–102 (LVLIDDVLMSGRT) carry the PRPP-binding motif.

The protein belongs to the purine/pyrimidine phosphoribosyltransferase family. PyrR subfamily.

The catalysed reaction is UMP + diphosphate = 5-phospho-alpha-D-ribose 1-diphosphate + uracil. Functionally, regulates the transcription of the pyrimidine nucleotide (pyr) operon in response to exogenous pyrimidines. Also displays a weak uracil phosphoribosyltransferase activity which is not physiologically significant. This chain is Bifunctional protein PyrR, found in Pseudomonas fluorescens (strain ATCC BAA-477 / NRRL B-23932 / Pf-5).